Consider the following 301-residue polypeptide: 4-hydroxy-tetrahydrodipicolinate synthase (301 aa).

Pyruvate is bound at residue Thr53. Tyr142 functions as the Proton donor/acceptor in the catalytic mechanism. Lys170 functions as the Schiff-base intermediate with substrate in the catalytic mechanism. Val212 contacts pyruvate.

This sequence belongs to the DapA family. Homotetramer; dimer of dimers.

The protein resides in the cytoplasm. The enzyme catalyses L-aspartate 4-semialdehyde + pyruvate = (2S,4S)-4-hydroxy-2,3,4,5-tetrahydrodipicolinate + H2O + H(+). It participates in amino-acid biosynthesis; L-lysine biosynthesis via DAP pathway; (S)-tetrahydrodipicolinate from L-aspartate: step 3/4. Functionally, catalyzes the condensation of (S)-aspartate-beta-semialdehyde [(S)-ASA] and pyruvate to 4-hydroxy-tetrahydrodipicolinate (HTPA). This is 4-hydroxy-tetrahydrodipicolinate synthase from Synechocystis sp. (strain ATCC 27184 / PCC 6803 / Kazusa).